A 270-amino-acid polypeptide reads, in one-letter code: Thiazole synthase (270 aa).

Lysine 111 functions as the Schiff-base intermediate with DXP in the catalytic mechanism. 1-deoxy-D-xylulose 5-phosphate is bound by residues glycine 172, 198 to 199 (AG), and 220 to 221 (NT).

Belongs to the ThiG family. As to quaternary structure, homotetramer. Forms heterodimers with either ThiH or ThiS.

The protein resides in the cytoplasm. It catalyses the reaction [ThiS sulfur-carrier protein]-C-terminal-Gly-aminoethanethioate + 2-iminoacetate + 1-deoxy-D-xylulose 5-phosphate = [ThiS sulfur-carrier protein]-C-terminal Gly-Gly + 2-[(2R,5Z)-2-carboxy-4-methylthiazol-5(2H)-ylidene]ethyl phosphate + 2 H2O + H(+). Its pathway is cofactor biosynthesis; thiamine diphosphate biosynthesis. Catalyzes the rearrangement of 1-deoxy-D-xylulose 5-phosphate (DXP) to produce the thiazole phosphate moiety of thiamine. Sulfur is provided by the thiocarboxylate moiety of the carrier protein ThiS. In vitro, sulfur can be provided by H(2)S. The chain is Thiazole synthase from Methylococcus capsulatus (strain ATCC 33009 / NCIMB 11132 / Bath).